We begin with the raw amino-acid sequence, 499 residues long: CD-NTase-associated protein 4 (499 aa).

The segment at 1–226 is N-terminal endonuclease domain; sequence MATSVLANWH…DFRFDGAARA (226 aa). Active-site residues include Asp-49 and Gln-72. Asp-49 is a binding site for Mg(2+). Ile-73 contributes to the Mg(2+) binding site. Residue Lys-74 is part of the active site. The tract at residues 258 to 464 is C-terminal SAVED domain; that stretch reads FRNVALRSFS…HIFSAAPNAV (207 aa).

It belongs to the Cap4 nuclease family. A monomer in the absence of ligand, in its presence it forms oligomers. The cofactor is Mg(2+).

With respect to regulation, DNase activity is activated upon ligand binding (cAAG). Inhibited by EDTA. Effector DNase of a CBASS antivirus system. CBASS (cyclic oligonucleotide-based antiphage signaling system) provides immunity against bacteriophages. The CD-NTase protein (CdnD) synthesizes cyclic nucleotides in response to infection; these serve as specific second messenger signals. The signals activate a diverse range of effectors, leading to bacterial cell death and thus abortive phage infection. A type II-C(AAG) CBASS system. Functionally, binds second messenger 3',3',3'-cyclic AMP-AMP-GMP (cAAG). In the presence of cAAG (synthesized by the cognate CD-NTase protein in the CBASS operon), endonucleolytically degrades dsDNA to approximately 17 bp length fragments, with a preference for 5'-C|NG sites. Only binds DNA in the presence of cAAG. Not activated by c-di-AMP, c-di-GMP, 3',3'-cyclic GMP-AMP (cGAMP) or the second messenger of A.baumanii strain ATCC 27244. Its function is as follows. Protects E.coli against phage T2 infection. When the cdnD-cap2-cap3-cap4 operon is introduced in E.coli there is a more than 10(3) decrease in the efficiency of T2 plaque formation. The operon does not protect against phage T5 and only about 10-fold against T7. Expression of cdnD-cap4 alone protects E.coli against phage T2 infection. This is CD-NTase-associated protein 4 from Enterobacter hormaechei subsp. hoffmannii (strain UCI 50).